The chain runs to 365 residues: 2-aminoethylphosphonate--pyruvate transaminase (365 aa).

Position 194 is an N6-(pyridoxal phosphate)lysine (Lys194).

The protein belongs to the class-V pyridoxal-phosphate-dependent aminotransferase family. PhnW subfamily. In terms of assembly, homodimer. Pyridoxal 5'-phosphate is required as a cofactor.

The catalysed reaction is (2-aminoethyl)phosphonate + pyruvate = phosphonoacetaldehyde + L-alanine. Its function is as follows. Involved in phosphonate degradation. The polypeptide is 2-aminoethylphosphonate--pyruvate transaminase (Bacillus cereus (strain ATCC 14579 / DSM 31 / CCUG 7414 / JCM 2152 / NBRC 15305 / NCIMB 9373 / NCTC 2599 / NRRL B-3711)).